The following is a 266-amino-acid chain: Very-long-chain aldehyde decarbonylase GL1-11 (266 aa).

A run of 4 helical transmembrane segments spans residues 25–45 (VVTF…SLLF), 74–94 (ILYH…AFKF), 106–126 (WTVI…IFYW), and 163–183 (ILFL…HLFT). The region spanning 113 to 248 (VLFYFVLEDF…FVYMDWLFGT (136 aa)) is the Fatty acid hydroxylase domain.

This sequence belongs to the sterol desaturase family. Homodimer.

The protein localises to the endoplasmic reticulum membrane. The catalysed reaction is a long-chain fatty aldehyde + 2 NADPH + O2 + H(+) = a long-chain alkane + formate + 2 NADP(+) + H2O. Aldehyde decarbonylase involved in the conversion of aldehydes to alkanes. Core component of a very-long-chain alkane synthesis complex. This is Very-long-chain aldehyde decarbonylase GL1-11 from Oryza sativa subsp. indica (Rice).